An 807-amino-acid chain; its full sequence is Leucine--tRNA ligase (807 aa).

Positions 38-49 (PYPSGSGLHVGH) match the 'HIGH' region motif. The 'KMSKS' region motif lies at 579 to 583 (KMSKS). An ATP-binding site is contributed by K582.

It belongs to the class-I aminoacyl-tRNA synthetase family.

The protein resides in the cytoplasm. It carries out the reaction tRNA(Leu) + L-leucine + ATP = L-leucyl-tRNA(Leu) + AMP + diphosphate. This chain is Leucine--tRNA ligase, found in Mycoplasmopsis pulmonis (strain UAB CTIP) (Mycoplasma pulmonis).